A 137-amino-acid polypeptide reads, in one-letter code: Large ribosomal subunit protein uL16 (137 aa).

This sequence belongs to the universal ribosomal protein uL16 family. Part of the 50S ribosomal subunit.

Functionally, binds 23S rRNA and is also seen to make contacts with the A and possibly P site tRNAs. The protein is Large ribosomal subunit protein uL16 of Xanthobacter autotrophicus (strain ATCC BAA-1158 / Py2).